The sequence spans 57 residues: Andropin (57 aa).

An N-terminal signal peptide occupies residues 1–23; the sequence is MKYFVVLVVLALILAITVDPSDA.

Belongs to the andropin family. In terms of tissue distribution, ejaculatory duct of adult males.

It localises to the secreted. In terms of biological role, male-specific peptide with moderate activity against Gram-positive bacteria. The sequence is that of Andropin (Anp) from Drosophila sechellia (Fruit fly).